The chain runs to 458 residues: Monomethylamine methyltransferase MtmB3 (458 aa).

Residue Pyl-202 is a non-standard amino acid, pyrrolysine.

It belongs to the monomethylamine methyltransferase family.

It catalyses the reaction Co(I)-[methylamine-specific corrinoid protein] + methylamine + H(+) = methyl-Co(III)-[methylamine-specific corrinoid protein] + NH4(+). Its pathway is one-carbon metabolism; methanogenesis from methylamine. In terms of biological role, catalyzes the transfer of the methyl group from monomethylamine to the corrinoid cofactor of MtmC. The sequence is that of Monomethylamine methyltransferase MtmB3 (mtmB3) from Methanosarcina barkeri (strain Fusaro / DSM 804).